Here is a 341-residue protein sequence, read N- to C-terminus: RNA 3'-terminal phosphate cyclase (341 aa).

ATP-binding positions include Gln-100 and 283-287; that span reads FLGDQ. The active-site Tele-AMP-histidine intermediate is the His-307.

It belongs to the RNA 3'-terminal cyclase family. Type 1 subfamily.

The protein localises to the cytoplasm. It catalyses the reaction a 3'-end 3'-phospho-ribonucleotide-RNA + ATP = a 3'-end 2',3'-cyclophospho-ribonucleotide-RNA + AMP + diphosphate. Catalyzes the conversion of 3'-phosphate to a 2',3'-cyclic phosphodiester at the end of RNA. The mechanism of action of the enzyme occurs in 3 steps: (A) adenylation of the enzyme by ATP; (B) transfer of adenylate to an RNA-N3'P to produce RNA-N3'PP5'A; (C) and attack of the adjacent 2'-hydroxyl on the 3'-phosphorus in the diester linkage to produce the cyclic end product. The biological role of this enzyme is unknown but it is likely to function in some aspects of cellular RNA processing. In Pyrococcus horikoshii (strain ATCC 700860 / DSM 12428 / JCM 9974 / NBRC 100139 / OT-3), this protein is RNA 3'-terminal phosphate cyclase (rtcA).